We begin with the raw amino-acid sequence, 277 residues long: Release factor glutamine methyltransferase (277 aa).

Residues 117 to 121 (GTGTG), D140, W168, and N183 contribute to the S-adenosyl-L-methionine site. 183–186 (NPPY) contributes to the substrate binding site.

The protein belongs to the protein N5-glutamine methyltransferase family. PrmC subfamily.

The catalysed reaction is L-glutaminyl-[peptide chain release factor] + S-adenosyl-L-methionine = N(5)-methyl-L-glutaminyl-[peptide chain release factor] + S-adenosyl-L-homocysteine + H(+). In terms of biological role, methylates the class 1 translation termination release factors RF1/PrfA and RF2/PrfB on the glutamine residue of the universally conserved GGQ motif. This chain is Release factor glutamine methyltransferase, found in Shigella dysenteriae serotype 1 (strain Sd197).